Reading from the N-terminus, the 349-residue chain is Isopentenyl-diphosphate delta-isomerase (349 aa).

Position 6-7 (6-7) interacts with substrate; sequence RK. Residues 62-64, serine 93, and asparagine 122 each bind FMN; that span reads AMT. Glutamine 152 is a binding site for substrate. Glutamate 153 contributes to the Mg(2+) binding site. Residues lysine 184, threonine 214, 258–259, and 280–281 contribute to the FMN site; these read GG and AG.

Belongs to the IPP isomerase type 2 family. As to quaternary structure, homooctamer. Dimer of tetramers. The cofactor is FMN. It depends on NADPH as a cofactor. Mg(2+) serves as cofactor.

The protein localises to the cytoplasm. The catalysed reaction is isopentenyl diphosphate = dimethylallyl diphosphate. Functionally, involved in the biosynthesis of isoprenoids. Catalyzes the 1,3-allylic rearrangement of the homoallylic substrate isopentenyl (IPP) to its allylic isomer, dimethylallyl diphosphate (DMAPP). The chain is Isopentenyl-diphosphate delta-isomerase from Bacillus anthracis (strain A0248).